An 82-amino-acid polypeptide reads, in one-letter code: Small ribosomal subunit protein bS16 (82 aa).

Belongs to the bacterial ribosomal protein bS16 family.

The sequence is that of Small ribosomal subunit protein bS16 from Gloeothece citriformis (strain PCC 7424) (Cyanothece sp. (strain PCC 7424)).